We begin with the raw amino-acid sequence, 1861 residues long: Amylopullulanase (1861 aa).

The first 35 residues, 1–35 (MNKKLFTNRFISFNMSLLLVLTAVFSSIPLHSVHA), serve as a signal peptide directing secretion. Ca(2+)-binding residues include D248, N250, D288, D343, N401, D403, N406, D407, and D453. Residues H526 and R626 each contribute to the substrate site. The active-site Nucleophile is the D628. The active-site Proton donor is the E657. Substrate contacts are provided by residues 733-734 (HD), D793, and R797. Fibronectin type-III domains follow at residues 929 to 1021 (APQA…AYPI) and 1158 to 1252 (KPTA…VVPI). Residues 1246 to 1354 (KPDVVPIKVI…INDTVYRWRD (109 aa)) enclose the CBM20 domain. The tract at residues 1448–1486 (QENNSGSGTGNNNTSTSGSNSSSTGSGSTGSTSITSNIS) is disordered. Low complexity predominate over residues 1450–1486 (NNSGSGTGNNNTSTSGSNSSSTGSGSTGSTSITSNIS). SLH domains lie at 1677-1740 (EYDK…YSGE), 1741-1799 (FSDV…KEEN), and 1802-1861 (ATTF…SGNI).

It belongs to the glycosyl hydrolase 13 family. Ca(2+) serves as cofactor. In terms of processing, glycosylated.

Its subcellular location is the secreted. It localises to the cell wall. The catalysed reaction is Endohydrolysis of (1-&gt;4)-alpha-D-glucosidic linkages in polysaccharides containing three or more (1-&gt;4)-alpha-linked D-glucose units.. It carries out the reaction Hydrolysis of (1-&gt;6)-alpha-D-glucosidic linkages in pullulan, amylopectin and glycogen, and in the alpha- and beta-limit dextrins of amylopectin and glycogen.. This is Amylopullulanase (amyB) from Thermoanaerobacterium thermosulfurigenes (Clostridium thermosulfurogenes).